The chain runs to 310 residues: 4-hydroxyproline epimerase (310 aa).

Catalysis depends on C88, which acts as the Proton acceptor. Residues 89-90 (GH), H208, and D232 contribute to the substrate site. Catalysis depends on C236, which acts as the Proton donor. 237-238 (GT) contacts substrate.

Belongs to the proline racemase family. Homodimer.

The enzyme catalyses trans-4-hydroxy-L-proline = cis-4-hydroxy-D-proline. Inhibited by iodoacetate, iodoacetamide and by high amounts (10 mM) of pyrrole-2-carboxylic acid (PYC). Not inhibited by PYC at 1 mM. Functionally, allows intracellular utilization of 4-hydroxyproline, one of the major constituents of host collagen, by converting 4-hydroxy-L-proline to 4-hydroxy-D-proline, which can be further metabolized by intracellular 4-hydroxy-D-proline oxidases. This Burkholderia pseudomallei (strain K96243) protein is 4-hydroxyproline epimerase.